The primary structure comprises 609 residues: Protein tesmin/TSO1-like CXC 3 (609 aa).

Basic and acidic residues predominate over residues 69–84 (ESRFRSQKDVSASKEV). 4 disordered regions span residues 69–102 (ESRF…YKND), 307–328 (PISP…SSCK), 457–477 (LFEQ…KTQQ), and 569–609 (NSKR…TPHH). A CRC domain is found at 326 to 451 (SCKRCNCKKS…RCEGCKNAFG (126 aa)). Positions 466–477 (TSGTPGTKKTQQ) are enriched in polar residues.

The protein belongs to the lin-54 family. In terms of tissue distribution, ubiquitous but expressed mostly in flowers and at significant levels in leaves. Detected with highest levels in developing ovules and microspores, and in petals.

The protein localises to the nucleus. Its function is as follows. Plays a role in development of both male and female reproductive tissues. This chain is Protein tesmin/TSO1-like CXC 3 (TCX3), found in Arabidopsis thaliana (Mouse-ear cress).